The primary structure comprises 190 residues: Translation initiation factor IF-3 (190 aa).

It belongs to the IF-3 family. As to quaternary structure, monomer.

It localises to the cytoplasm. Functionally, IF-3 binds to the 30S ribosomal subunit and shifts the equilibrium between 70S ribosomes and their 50S and 30S subunits in favor of the free subunits, thus enhancing the availability of 30S subunits on which protein synthesis initiation begins. In Prochlorococcus marinus (strain AS9601), this protein is Translation initiation factor IF-3.